Reading from the N-terminus, the 87-residue chain is U3-theraphotoxin-Cg1c (87 aa).

A signal peptide spans 1–23 (MRTFTLIAILTCAVLVIFHVSAA). The propeptide occupies 24–51 (EELEAQDVIQPEDIFTGVATLEEDRIFE). Intrachain disulfides connect cysteine 52-cysteine 65, cysteine 56-cysteine 79, and cysteine 73-cysteine 84.

The protein belongs to the neurotoxin 12 (Hwtx-2) family. 03 (juruin) subfamily. Expressed by the venom gland.

The protein localises to the secreted. Functionally, probable ion channel inhibitor. In Chilobrachys guangxiensis (Chinese earth tiger tarantula), this protein is U3-theraphotoxin-Cg1c.